The primary structure comprises 576 residues: Alkaline phosphatase PhoD (576 aa).

Residues 1 to 32 form the signal peptide; sequence MNSLLHHSFLKTVFSSLAIAIVTSSLSSVTIA. The Zn(2+) site is built by Asp68 and Thr107. Thr107 serves as the catalytic Phosphothreonine intermediate. The cysteines at positions 108 and 144 are disulfide-linked. Substrate is bound by residues Asn128 and 188–190; that span reads KDR. A disulfide bridge links Cys248 with Cys332. Zn(2+) is bound by residues Asp318, His322, Asp363, His364, and His508. Cys562 and Cys573 are joined by a disulfide.

In terms of assembly, monomer. Zn(2+) serves as cofactor.

It catalyses the reaction a phosphate monoester + H2O = an alcohol + phosphate. Functionally, alkaline phosphatase with broad substrate specificity. Has phosphatase activity towards nucleotide and sugar phosphates with a preference to nucleotide phosphates. Has no phosphodiesterase activity. This Zymomonas mobilis subsp. mobilis (strain ATCC 31821 / ZM4 / CP4) protein is Alkaline phosphatase PhoD.